The sequence spans 633 residues: Threonine--tRNA ligase (633 aa).

A TGS domain is found at 1–61 (MINISFPDGS…DNDCRLRILT (61 aa)). Residues 242-533 (DHRKLGKELD…LIEEYAGRFP (292 aa)) form a catalytic region. Residues Cys-333, His-384, and His-510 each coordinate Zn(2+).

Belongs to the class-II aminoacyl-tRNA synthetase family. As to quaternary structure, homodimer. The cofactor is Zn(2+).

It is found in the cytoplasm. It carries out the reaction tRNA(Thr) + L-threonine + ATP = L-threonyl-tRNA(Thr) + AMP + diphosphate + H(+). Functionally, catalyzes the attachment of threonine to tRNA(Thr) in a two-step reaction: L-threonine is first activated by ATP to form Thr-AMP and then transferred to the acceptor end of tRNA(Thr). Also edits incorrectly charged L-seryl-tRNA(Thr). The protein is Threonine--tRNA ligase of Rickettsia bellii (strain OSU 85-389).